A 1374-amino-acid polypeptide reads, in one-letter code: Ribonuclease 3 (1374 aa).

Disordered stretches follow at residues 1–95 (MMQG…PLPP), 130–406 (PPVP…EEEE), and 452–497 (LGSR…SSSS). The span at 59–68 (PSTTFSNSPA) shows a compositional bias: polar residues. Composition is skewed to pro residues over residues 70–95 (NFLP…PLPP) and 145–160 (MMPP…PPVM). The span at 182–202 (FNSFQNNPSSFLPSANNSSSP) shows a compositional bias: low complexity. Composition is skewed to basic and acidic residues over residues 216–289 (PSER…ERER) and 298–313 (RRSP…EYKR). A phosphoserine mark is found at S355 and S373. Positions 364-399 (RWEEEKDRWSDNQSSGKDKNYTSIKEKEPEETMPDK) are enriched in basic and acidic residues. The tract at residues 390–1365 (KEPEETMPDK…RWEREHQERE (976 aa)) is necessary for interaction with DGCR8 and pri-miRNA processing activity. Residues 475-491 (EDLESSSESECESDEDS) show a composition bias toward acidic residues. 7 residues coordinate Zn(2+): C536, C538, H549, C561, H609, C676, and H680. RNase III domains follow at residues 876–1056 (LMHL…LEGS) and 1107–1233 (LTEF…IDKD). E969 lines the Mg(2+) pocket. H1026 contributes to the Zn(2+) binding site. Mg(2+) is bound by residues N1042, E1045, E1147, D1219, and E1222. The 75-residue stretch at 1260 to 1334 (DPKSQLQQCC…AMDALEKYNF (75 aa)) folds into the DRBM domain.

Belongs to the ribonuclease III family. As to quaternary structure, component of the microprocessor complex, or pri-miRNA processing protein complex, which is composed of DROSHA and DGCR8. The microprocessor complex is a heterotrimer; each of the two DROSHA RNase III domains binds one DGCR8 (via C-terminal region). Interacts with SP1 and SNIP1. Interacts with SRRT/ARS2. Interacts with CPSF3 and ISY1; this interaction is in an RNA dependent manner. Interacts with PUS10; interaction promotes pri-miRNAs processing. Requires Mg(2+) as cofactor. Mn(2+) serves as cofactor. In terms of processing, degraded by autophagy in response to neuronal activity in motor neurons. Ubiquitous.

It is found in the nucleus. Its subcellular location is the nucleolus. The protein localises to the cytoplasm. It catalyses the reaction Endonucleolytic cleavage to 5'-phosphomonoester.. In terms of biological role, ribonuclease III double-stranded (ds) RNA-specific endoribonuclease that is involved in the initial step of microRNA (miRNA) biogenesis. Component of the microprocessor complex that is required to process primary miRNA transcripts (pri-miRNAs) to release precursor miRNA (pre-miRNA) in the nucleus. Within the microprocessor complex, DROSHA cleaves the 3' and 5' strands of a stem-loop in pri-miRNAs (processing center 11 bp from the dsRNA-ssRNA junction) to release hairpin-shaped pre-miRNAs that are subsequently cut by the cytoplasmic DICER to generate mature miRNAs. Involved also in pre-rRNA processing. Cleaves double-strand RNA and does not cleave single-strand RNA. Involved in the formation of GW bodies. Plays a role in growth homeostasis in response to autophagy in motor neurons. This Homo sapiens (Human) protein is Ribonuclease 3 (DROSHA).